The following is a 430-amino-acid chain: Tol-Pal system protein TolB (430 aa).

Residues M1 to A26 form the signal peptide.

Belongs to the TolB family. The Tol-Pal system is composed of five core proteins: the inner membrane proteins TolA, TolQ and TolR, the periplasmic protein TolB and the outer membrane protein Pal. They form a network linking the inner and outer membranes and the peptidoglycan layer.

It is found in the periplasm. Part of the Tol-Pal system, which plays a role in outer membrane invagination during cell division and is important for maintaining outer membrane integrity. This Paraburkholderia phytofirmans (strain DSM 17436 / LMG 22146 / PsJN) (Burkholderia phytofirmans) protein is Tol-Pal system protein TolB.